The chain runs to 301 residues: Protease HtpX (301 aa).

Transmembrane regions (helical) follow at residues 4 to 24 (IGLF…VLFI) and 44 to 64 (TGLL…SLAM). H150 is a Zn(2+) binding site. The active site involves E151. Residue H154 participates in Zn(2+) binding. 2 consecutive transmembrane segments (helical) span residues 165–185 (LIQG…GHFV) and 201–221 (FITS…IVMW). E227 serves as a coordination point for Zn(2+).

It belongs to the peptidase M48B family. The cofactor is Zn(2+).

It is found in the cell inner membrane. This Alkalilimnicola ehrlichii (strain ATCC BAA-1101 / DSM 17681 / MLHE-1) protein is Protease HtpX.